We begin with the raw amino-acid sequence, 410 residues long: LL-diaminopimelate aminotransferase (410 aa).

Substrate contacts are provided by Tyr-15 and Gly-42. Residues Tyr-72, 108–109 (SK), Tyr-132, Asn-187, Tyr-218, and 246–248 (SFS) each bind pyridoxal 5'-phosphate. Lys-109, Tyr-132, and Asn-187 together coordinate substrate. An N6-(pyridoxal phosphate)lysine modification is found at Lys-249. Pyridoxal 5'-phosphate is bound by residues Arg-257 and Asn-292. Residues Asn-292 and Arg-388 each contribute to the substrate site.

It belongs to the class-I pyridoxal-phosphate-dependent aminotransferase family. LL-diaminopimelate aminotransferase subfamily. In terms of assembly, homodimer. Pyridoxal 5'-phosphate serves as cofactor.

It carries out the reaction (2S,6S)-2,6-diaminopimelate + 2-oxoglutarate = (S)-2,3,4,5-tetrahydrodipicolinate + L-glutamate + H2O + H(+). The protein operates within amino-acid biosynthesis; L-lysine biosynthesis via DAP pathway; LL-2,6-diaminopimelate from (S)-tetrahydrodipicolinate (aminotransferase route): step 1/1. Functionally, involved in the synthesis of meso-diaminopimelate (m-DAP or DL-DAP), required for both lysine and peptidoglycan biosynthesis. Catalyzes the direct conversion of tetrahydrodipicolinate to LL-diaminopimelate. In Syntrophotalea carbinolica (strain DSM 2380 / NBRC 103641 / GraBd1) (Pelobacter carbinolicus), this protein is LL-diaminopimelate aminotransferase.